We begin with the raw amino-acid sequence, 207 residues long: Guanylate kinase (207 aa).

One can recognise a Guanylate kinase-like domain in the interval 5 to 184 (GNLFIVSAPS…ALADLRAIIR (180 aa)). 12–19 (APSGAGKS) is an ATP binding site.

Belongs to the guanylate kinase family.

It localises to the cytoplasm. It carries out the reaction GMP + ATP = GDP + ADP. Functionally, essential for recycling GMP and indirectly, cGMP. The polypeptide is Guanylate kinase (Shewanella oneidensis (strain ATCC 700550 / JCM 31522 / CIP 106686 / LMG 19005 / NCIMB 14063 / MR-1)).